The following is a 40-amino-acid chain: Potassium channel toxin alpha-KTx 12.3 (40 aa).

4 cysteine pairs are disulfide-bonded: C2–C5, C10–C31, C16–C36, and C20–C38.

In terms of tissue distribution, expressed by the venom gland.

It localises to the secreted. Functionally, inhibits high conductance calcium-activated potassium channels (KCNMA). Inhibits Shaker B potassium channels. In Tityus costatus (Brazilian scorpion), this protein is Potassium channel toxin alpha-KTx 12.3.